A 55-amino-acid polypeptide reads, in one-letter code: ATP synthase F(0) complex subunit 8 (55 aa).

The chain crosses the membrane as a helical span at residues 4 to 24 (LNPAPWFAILVFSWLVFLTVI). The segment at 34–55 (TNEPTSQSTEKAKPEPWNWPWH) is disordered.

This sequence belongs to the ATPase protein 8 family. In terms of assembly, component of the ATP synthase complex composed at least of ATP5F1A/subunit alpha, ATP5F1B/subunit beta, ATP5MC1/subunit c (homooctomer), MT-ATP6/subunit a, MT-ATP8/subunit 8, ATP5ME/subunit e, ATP5MF/subunit f, ATP5MG/subunit g, ATP5MK/subunit k, ATP5MJ/subunit j, ATP5F1C/subunit gamma, ATP5F1D/subunit delta, ATP5F1E/subunit epsilon, ATP5PF/subunit F6, ATP5PB/subunit b, ATP5PD/subunit d, ATP5PO/subunit OSCP. ATP synthase complex consists of a soluble F(1) head domain (subunits alpha(3) and beta(3)) - the catalytic core - and a membrane F(0) domain - the membrane proton channel (subunits c, a, 8, e, f, g, k and j). These two domains are linked by a central stalk (subunits gamma, delta, and epsilon) rotating inside the F1 region and a stationary peripheral stalk (subunits F6, b, d, and OSCP).

The protein resides in the mitochondrion membrane. Functionally, subunit 8, of the mitochondrial membrane ATP synthase complex (F(1)F(0) ATP synthase or Complex V) that produces ATP from ADP in the presence of a proton gradient across the membrane which is generated by electron transport complexes of the respiratory chain. ATP synthase complex consist of a soluble F(1) head domain - the catalytic core - and a membrane F(1) domain - the membrane proton channel. These two domains are linked by a central stalk rotating inside the F(1) region and a stationary peripheral stalk. During catalysis, ATP synthesis in the catalytic domain of F(1) is coupled via a rotary mechanism of the central stalk subunits to proton translocation. In vivo, can only synthesize ATP although its ATP hydrolase activity can be activated artificially in vitro. Part of the complex F(0) domain. The protein is ATP synthase F(0) complex subunit 8 of Oncorhynchus mykiss (Rainbow trout).